We begin with the raw amino-acid sequence, 81 residues long: Acyl carrier protein 2 (81 aa).

Residues 1 to 79 (MTETEILERI…DVIGAVQSLL (79 aa)) enclose the Carrier domain. Serine 39 is modified (O-(pantetheine 4'-phosphoryl)serine).

This sequence belongs to the acyl carrier protein (ACP) family. In terms of processing, 4'-phosphopantetheine is transferred from CoA to a specific serine of apo-ACP by AcpS. This modification is essential for activity because fatty acids are bound in thioester linkage to the sulfhydryl of the prosthetic group.

Its subcellular location is the cytoplasm. It participates in lipid metabolism; fatty acid biosynthesis. Carrier of the growing fatty acid chain in fatty acid biosynthesis. The polypeptide is Acyl carrier protein 2 (Ralstonia nicotianae (strain ATCC BAA-1114 / GMI1000) (Ralstonia solanacearum)).